We begin with the raw amino-acid sequence, 489 residues long: MTFRNCVAVDLGASSGRVMLARYERECRSLTLREIHRFNNGLHSQNGYVTWDVDSLESAIRLGLNKVCEEGIRIDSIGIDTWGVDFVLLDQQGQRVGLPVAYRDSRTNGLMAQAQQQLGKRDIYQRSGIQFLPFNTLYQLRALTEQQPELIPHIAHALLMPDYFSYRLTGKMNWEYTNATTTQLVNINSDDWDESLLAWSGANKAWFGRPTHPGNVIGHWICPQGNEIPVVAVASHDTASAVIASPLNGSRAAYLSSGTWSLMGFESQTPFTNDTALAANITNEGGAEGRYRVLKNIMGLWLLQRVLQEQQINDLPALISATQALPACRFIINPNDDRFINPETMCSEIQAACRETAQPIPESDAELARCIFDSLALLYADVLHELAQLRGEDFSQLHIVGGGCQNTLLNQLCADACGIRVIAGPVEASTLGNIGIQLMTLDELNNVDDFRQVVSTTANLTTFTPNPDSEIAHYVAQIHSTRQTKELCA.

13-17 (ASSGR) contacts ATP. A disulfide bond links C68 and C222. Residues G83 and 236 to 238 (HDT) each bind substrate. D237 acts as the Proton acceptor in catalysis. ATP is bound at residue T259. Substrate is bound at residue N296. Q304 contributes to the ATP binding site. The cysteines at positions 353 and 370 are disulfide-linked. G402 provides a ligand contact to ATP. A disulfide bridge connects residues C413 and C417.

This sequence belongs to the rhamnulokinase family. In terms of assembly, monomer. Mg(2+) serves as cofactor.

The catalysed reaction is L-rhamnulose + ATP = L-rhamnulose 1-phosphate + ADP + H(+). The protein operates within carbohydrate degradation; L-rhamnose degradation; glycerone phosphate from L-rhamnose: step 2/3. In terms of biological role, involved in the catabolism of L-rhamnose (6-deoxy-L-mannose). Catalyzes the transfer of the gamma-phosphate group from ATP to the 1-hydroxyl group of L-rhamnulose to yield L-rhamnulose 1-phosphate. The protein is Rhamnulokinase of Escherichia coli (strain K12 / DH10B).